Reading from the N-terminus, the 326-residue chain is Target of rapamycin complex subunit lst8 (326 aa).

WD repeat units follow at residues 1 to 37, 40 to 80, 83 to 122, 126 to 165, 168 to 207, 218 to 257, and 268 to 309; these read MNVN…CTRT, HQDS…PVIN, GVSK…LQCQ, QVNA…NEQL, EPDV…GDEV, AHKR…LMTE, and TSRG…REYS.

This sequence belongs to the WD repeat LST8 family. Part of the mechanistic target of rapamycin complex 1 (mTORC1) which contains MTOR, MLST8 and RPTOR. Component of the mechanistic target of rapamycin complex 2 (mTORC2), consisting in two heterotretramers composed of MTOR, MLST8, RICTOR and MAPKAP1/SIN1.

The protein resides in the lysosome membrane. It localises to the cytoplasm. Functionally, subunit of both mTORC1 and mTORC2, which regulates cell growth and survival in response to nutrient and hormonal signals. mTORC1 is activated in response to growth factors or amino acids. In response to nutrients, mTORC1 is recruited to the lysosome membrane and promotes protein, lipid and nucleotide synthesis by phosphorylating several substrates, such as ribosomal protein S6 kinase (RPS6KB1 and RPS6KB2) and EIF4EBP1 (4E-BP1). In the same time, it inhibits catabolic pathways by phosphorylating the autophagy initiation components ULK1 and ATG13, as well as transcription factor TFEB, a master regulators of lysosomal biogenesis and autophagy. The mTORC1 complex is inhibited in response to starvation and amino acid depletion. Within mTORC1, MLST8 interacts directly with MTOR and enhances its kinase activity. In nutrient-poor conditions, stabilizes the MTOR-RPTOR interaction and favors RPTOR-mediated inhibition of MTOR activity. As part of the mTORC2 complex, transduces signals from growth factors to pathways involved in proliferation, cytoskeletal organization, lipogenesis and anabolic output. mTORC2 is also activated by growth factors, but seems to be nutrient-insensitive. In response to growth factors, mTORC2 phosphorylates and activates AGC protein kinase family members, including AKT (AKT1, AKT2 and AKT3), PKC (PRKCA, PRKCB and PRKCE) and SGK1. mTORC2 functions upstream of Rho GTPases to regulate the actin cytoskeleton, probably by activating one or more Rho-type guanine nucleotide exchange factors. mTORC2 promotes the serum-induced formation of stress-fibers or F-actin. Within mTORC2, MLST8 acts as a bridge between MAPKAP1/SIN1 and MTOR. The chain is Target of rapamycin complex subunit lst8 (mlst8) from Danio rerio (Zebrafish).